Here is a 430-residue protein sequence, read N- to C-terminus: Phosphomethylpyrimidine synthase (430 aa).

Substrate-binding positions include Asn68, Met96, Tyr125, His164, 186–188 (SRG), 227–230 (DALR), and Glu266. Zn(2+) is bound at residue His270. Residue Tyr293 coordinates substrate. Residue His334 participates in Zn(2+) binding. Residues Cys410, Cys413, and Cys417 each coordinate [4Fe-4S] cluster.

It belongs to the ThiC family. [4Fe-4S] cluster serves as cofactor.

The enzyme catalyses 5-amino-1-(5-phospho-beta-D-ribosyl)imidazole + S-adenosyl-L-methionine = 4-amino-2-methyl-5-(phosphooxymethyl)pyrimidine + CO + 5'-deoxyadenosine + formate + L-methionine + 3 H(+). The protein operates within cofactor biosynthesis; thiamine diphosphate biosynthesis. Catalyzes the synthesis of the hydroxymethylpyrimidine phosphate (HMP-P) moiety of thiamine from aminoimidazole ribotide (AIR) in a radical S-adenosyl-L-methionine (SAM)-dependent reaction. The sequence is that of Phosphomethylpyrimidine synthase from Pyrobaculum aerophilum (strain ATCC 51768 / DSM 7523 / JCM 9630 / CIP 104966 / NBRC 100827 / IM2).